Reading from the N-terminus, the 253-residue chain is Discoidin-1 subunit A (253 aa).

At Ser2 the chain carries N-acetylserine. One can recognise an F5/8 type C domain in the interval 2–152 (STQGLVQLLA…ISLRCEFYTQ (151 aa)). The Cell attachment site motif lies at 79–81 (RGD).

In terms of assembly, tetramer of four different chains (A to D). As to expression, stalk cells.

It localises to the cytoplasm. In terms of biological role, galactose- and N-acetylgalactosamine-binding lectin. May play a role in cell-substratum adhesion rather than in cell-cell adhesion. May be necessary for the maintenance of normal elongate morphology during aggregation. The sequence is that of Discoidin-1 subunit A (dscA-1) from Dictyostelium discoideum (Social amoeba).